The chain runs to 348 residues: 11-beta-hydroxysteroid dehydrogenase A (348 aa).

A helical; Signal-anchor for type II membrane protein membrane pass occupies residues 10 to 30 (LIAPPFTFFFLLFFLPPFQIF). Positions 13 to 26 (PPFTFFFLLFFLPP) match the Proline-knob motif. Residues 54–80 (GASS…AARR), Asp105, and 132–135 (NAGI) contribute to the NADP(+) site. Ser184 contacts substrate. Catalysis depends on Tyr197, which acts as the Proton acceptor. Residues 197–201 (YNASK) and Lys201 each bind NADP(+).

This sequence belongs to the short-chain dehydrogenases/reductases (SDR) family. Expressed in seeds (at protein level). Not expressed in stem, leaf or root (at protein level).

The protein localises to the lipid droplet. It is found in the membrane. It catalyses the reaction an 11beta-hydroxysteroid + NADP(+) = an 11-oxosteroid + NADPH + H(+). The enzyme catalyses an 11beta-hydroxysteroid + NAD(+) = an 11-oxosteroid + NADH + H(+). The catalysed reaction is corticosterone + NADP(+) = 11-dehydrocorticosterone + NADPH + H(+). It carries out the reaction corticosterone + NAD(+) = 11-dehydrocorticosterone + NADH + H(+). It catalyses the reaction 17beta-estradiol + NADP(+) = estrone + NADPH + H(+). The enzyme catalyses 17beta-estradiol + NAD(+) = estrone + NADH + H(+). In terms of biological role, has dehydrogenase activity against corticosterone (11 beta-hydroxysteroid) and estradiol (17 beta-hydroxysteroid), with higher activity against estradiol. Possesses higher dehydrogenase activity with NADP(+) than NAD(+) regardless of the sterol substrate. May be involved in signal transduction regulated by various sterols. This is 11-beta-hydroxysteroid dehydrogenase A from Sesamum indicum (Oriental sesame).